We begin with the raw amino-acid sequence, 246 residues long: UDP-N-acetyl-D-mannosaminuronic acid transferase (246 aa).

The protein belongs to the glycosyltransferase 26 family.

The enzyme catalyses UDP-N-acetyl-alpha-D-mannosaminouronate + N-acetyl-alpha-D-glucosaminyl-di-trans,octa-cis-undecaprenyl diphosphate = beta-D-ManNAcA-(1-&gt;4)-alpha-D-GlcNAc-di-trans,octa-cis-undecaprenyl diphosphate + UDP + H(+). The protein operates within bacterial outer membrane biogenesis; enterobacterial common antigen biosynthesis. Its function is as follows. Catalyzes the synthesis of Und-PP-GlcNAc-ManNAcA (Lipid II), the second lipid-linked intermediate involved in enterobacterial common antigen (ECA) synthesis. The polypeptide is UDP-N-acetyl-D-mannosaminuronic acid transferase (Escherichia coli (strain K12)).